We begin with the raw amino-acid sequence, 355 residues long: Protein RecA (355 aa).

Position 67-74 (67-74 (GPESSGKT)) interacts with ATP.

It belongs to the RecA family.

It localises to the cytoplasm. In terms of biological role, can catalyze the hydrolysis of ATP in the presence of single-stranded DNA, the ATP-dependent uptake of single-stranded DNA by duplex DNA, and the ATP-dependent hybridization of homologous single-stranded DNAs. It interacts with LexA causing its activation and leading to its autocatalytic cleavage. The protein is Protein RecA of Shewanella baltica (strain OS223).